Consider the following 560-residue polypeptide: DNA ligase B (560 aa).

Lysine 124 (N6-AMP-lysine intermediate) is an active-site residue.

Belongs to the NAD-dependent DNA ligase family. LigB subfamily.

It catalyses the reaction NAD(+) + (deoxyribonucleotide)n-3'-hydroxyl + 5'-phospho-(deoxyribonucleotide)m = (deoxyribonucleotide)n+m + AMP + beta-nicotinamide D-nucleotide.. Its function is as follows. Catalyzes the formation of phosphodiester linkages between 5'-phosphoryl and 3'-hydroxyl groups in double-stranded DNA using NAD as a coenzyme and as the energy source for the reaction. This Shigella sonnei (strain Ss046) protein is DNA ligase B.